The sequence spans 408 residues: Phosphoglycerate kinase (408 aa).

Substrate-binding positions include 24-26, Arg-39, 62-65, Arg-121, and Arg-161; these read DLN and HLGR. Residues Lys-211, Gly-307, Glu-338, and 364–367 contribute to the ATP site; that span reads GGDS.

Belongs to the phosphoglycerate kinase family. Monomer.

The protein localises to the cytoplasm. The enzyme catalyses (2R)-3-phosphoglycerate + ATP = (2R)-3-phospho-glyceroyl phosphate + ADP. Its pathway is carbohydrate degradation; glycolysis; pyruvate from D-glyceraldehyde 3-phosphate: step 2/5. This chain is Phosphoglycerate kinase, found in Paenarthrobacter aurescens (strain TC1).